A 104-amino-acid polypeptide reads, in one-letter code: Elicitor peptide 6 (104 aa).

Positions 1 to 81 (MEVNGEEERR…TVEETGFMAR (81 aa)) are excised as a propeptide. The segment covering 48-61 (SSSIPPSSSSSSPS) has biased composition (low complexity). The interval 48–104 (SSSIPPSSSSSSPSLVEEEDSGTETVEETGFMARITAVLRRRPRPPPYSSGRPGQNN) is disordered. Acidic residues predominate over residues 63–74 (VEEEDSGTETVE).

This sequence belongs to the brassicaceae elicitor peptide family.

Elicitor of plant defense. The sequence is that of Elicitor peptide 6 (PEP6) from Arabidopsis thaliana (Mouse-ear cress).